We begin with the raw amino-acid sequence, 180 residues long: Protein SPMIP9 (180 aa).

In terms of assembly, microtubule inner protein component of sperm flagellar doublet microtubules. As to expression, only detected after the mouse is 35 days old. Expression increases gradually from day 35 to 6 months, and remains stable after 54 days. Exclusively expressed in the epididymis and testis.

The protein localises to the nucleus. It localises to the cytoplasm. It is found in the cytoskeleton. The protein resides in the flagellum axoneme. In terms of biological role, microtubule inner protein (MIP) part of the dynein-decorated doublet microtubules (DMTs) in flagella axoneme. This chain is Protein SPMIP9 (Spmip9), found in Mus musculus (Mouse).